Reading from the N-terminus, the 219-residue chain is Large ribosomal subunit protein uL3 (219 aa).

This sequence belongs to the universal ribosomal protein uL3 family. As to quaternary structure, part of the 50S ribosomal subunit. Forms a cluster with proteins L14 and L19.

Functionally, one of the primary rRNA binding proteins, it binds directly near the 3'-end of the 23S rRNA, where it nucleates assembly of the 50S subunit. This is Large ribosomal subunit protein uL3 from Salinispora arenicola (strain CNS-205).